We begin with the raw amino-acid sequence, 88 residues long: DNA-directed RNA polymerase subunit omega (88 aa).

Belongs to the RNA polymerase subunit omega family. The RNAP catalytic core consists of 2 alpha, 1 beta, 1 beta' and 1 omega subunit. When a sigma factor is associated with the core the holoenzyme is formed, which can initiate transcription.

The catalysed reaction is RNA(n) + a ribonucleoside 5'-triphosphate = RNA(n+1) + diphosphate. Its function is as follows. Promotes RNA polymerase assembly. Latches the N- and C-terminal regions of the beta' subunit thereby facilitating its interaction with the beta and alpha subunits. The protein is DNA-directed RNA polymerase subunit omega of Yersinia pestis (strain Pestoides F).